A 1000-amino-acid polypeptide reads, in one-letter code: Exportin-T (1000 aa).

The protein belongs to the exportin family.

It is found in the nucleus. It localises to the cytoplasm. TRNA nucleus export receptor which facilitates tRNA translocation across the nuclear pore complex. Involved in pre-tRNA splicing, probably by affecting the interaction of pre-tRNA with splicing endonuclease. This Debaryomyces hansenii (strain ATCC 36239 / CBS 767 / BCRC 21394 / JCM 1990 / NBRC 0083 / IGC 2968) (Yeast) protein is Exportin-T (LOS1).